A 205-amino-acid polypeptide reads, in one-letter code: Large ribosomal subunit protein uL3 (205 aa).

It belongs to the universal ribosomal protein uL3 family. In terms of assembly, part of the 50S ribosomal subunit. Forms a cluster with proteins L14 and L19.

In terms of biological role, one of the primary rRNA binding proteins, it binds directly near the 3'-end of the 23S rRNA, where it nucleates assembly of the 50S subunit. In Bacteroides thetaiotaomicron (strain ATCC 29148 / DSM 2079 / JCM 5827 / CCUG 10774 / NCTC 10582 / VPI-5482 / E50), this protein is Large ribosomal subunit protein uL3.